The following is a 162-amino-acid chain: RNA pyrophosphohydrolase (162 aa).

The Nudix hydrolase domain maps to 11-155; it reads PYRPCVGIVL…KRAVYEEVVA (145 aa). The Nudix box signature appears at 45–66; the sequence is GGIDEGEKPREAALRELWEETG.

It belongs to the Nudix hydrolase family. RppH subfamily. The cofactor is a divalent metal cation.

In terms of biological role, accelerates the degradation of transcripts by removing pyrophosphate from the 5'-end of triphosphorylated RNA, leading to a more labile monophosphorylated state that can stimulate subsequent ribonuclease cleavage. This Cereibacter sphaeroides (strain ATCC 17029 / ATH 2.4.9) (Rhodobacter sphaeroides) protein is RNA pyrophosphohydrolase.